Here is a 183-residue protein sequence, read N- to C-terminus: SAYSvFN domain-containing protein 1 (183 aa).

Residues 1–105 (MEQRLAEFRA…SFLTNITFLK (105 aa)) are Cytoplasmic-facing. The tract at residues 11–36 (ARKRAGLAAQPPAASQGAQTPGEKAE) is disordered. A compositionally biased stretch (low complexity) spans 16–36 (GLAAQPPAASQGAQTPGEKAE). The segment at 91-105 (SCWDQSFLTNITFLK) is middle helical (MH). Residues 106-126 (VLLWLVLLGLFVELEFGLAYF) constitute an intramembrane region (helical). Topologically, residues 127 to 183 (VLSLFYWMYVGTRGPEEKKEGEKSAYSVFNPGCEAIQGTLTAEQLERELQLRPLAGR) are cytoplasmic.

It belongs to the SAYSD1 family. In terms of assembly, associates (via N-terminus) with ribosomes.

It is found in the endoplasmic reticulum membrane. It localises to the cytoplasmic vesicle membrane. Functionally, ufmylation 'reader' component of a translocation-associated quality control pathway, a mechanism that takes place when a ribosome has stalled during translation, and which is required to degrade clogged substrates. Specifically recognizes and binds ufmylated ribosomes when a ribosome has stalled, promoting the transport of stalled nascent chain via the TRAPP complex to lysosomes for degradation. This Homo sapiens (Human) protein is SAYSvFN domain-containing protein 1.